The primary structure comprises 419 residues: D-galactonate dehydratase family member SEN1436 (419 aa).

Substrate contacts are provided by glutamine 45 and histidine 129. Tyrosine 160 functions as the Proton donor/acceptor in the catalytic mechanism. Aspartate 225 contributes to the Mg(2+) binding site. The active-site Proton donor/acceptor is the histidine 227. Glutamate 251 and glutamate 277 together coordinate Mg(2+). Residues glutamate 277, arginine 298, histidine 327, aspartate 331, and glutamate 354 each contribute to the substrate site.

This sequence belongs to the mandelate racemase/muconate lactonizing enzyme family. GalD subfamily. As to quaternary structure, homotetramer. Requires Mg(2+) as cofactor.

It catalyses the reaction D-gluconate = 2-dehydro-3-deoxy-D-gluconate + H2O. Functionally, has low D-gluconate dehydratase activity (in vitro), suggesting that it has no significant role in D-gluconate degradation in vivo. Has no detectable activity with a panel of 70 other acid sugars (in vitro). The chain is D-galactonate dehydratase family member SEN1436 from Salmonella enteritidis PT4 (strain P125109).